The following is a 439-amino-acid chain: Packaging protein 1 (439 aa).

Residues 1-23 (MSTQIPARQETYDPSQSSGTKTP) show a composition bias toward polar residues. A disordered region spans residues 1–42 (MSTQIPARQETYDPSQSSGTKTPSHPYDGNPTRSYPKRNAGK). Residue 151-158 (GPTGSGKS) participates in ATP binding. Positions 419 to 439 (ERNPKLTDLEKLSPPGTFQET) are DNA-binding.

Belongs to the adenoviridae packaging protein 1 family. As to quaternary structure, homodimer. Part of a genome packaging complex composed of packaging proteins 1, 2 and 3; this complex specifically binds to the packaging sequence on the left end of viral genomic DNA and performs packaging of the viral genome. Interacts with protein 33K.

It localises to the virion. It is found in the host nucleus. Its subcellular location is the host nucleoplasm. The protein resides in the host nucleolus. Component of the packaging machinery which encapsidates the viral DNA into preformed capsids and transcriptional activator of the viral major late promoter (MLP). Binds, along with packaging proteins 2 and 3, to the specific packaging sequence on the left end of viral genomic DNA and displays ATPase activity thereby providing the power stroke of the packaging machinery. The activity of packaging protein IVa2 is stimulated by protein 33K which acts as a terminase. May be the protein that pumps DNA into the capsid powered by ATP hydrolysis. Specifically binds to the 5'-CG-3' nucleotides of the repeats making up the packaging sequence. Component of the DEF-A and DEF-B transcription factors that bind downstream elements of the major late promoter (MLP), and stimulate transcription from the MLP after initiation of viral DNA replication. DEF-A is a heterodimer packaging proteins 1 and 2 and DEF-B is a homodimer of packaging protein 1. The polypeptide is Packaging protein 1 (Fowl adenovirus A serotype 1 (strain CELO / Phelps) (FAdV-1)).